A 323-amino-acid chain; its full sequence is Arginase (323 aa).

Positions 119, 142, 144, and 146 each coordinate Mn(2+). Substrate contacts are provided by residues 144–148 (HADIN), 155–157 (SKN), and Asp-198. 2 residues coordinate Mn(2+): Asp-247 and Asp-249. Thr-261 and Glu-292 together coordinate substrate.

It belongs to the arginase family. In terms of assembly, homotrimer. Mn(2+) is required as a cofactor.

It catalyses the reaction L-arginine + H2O = urea + L-ornithine. Its pathway is nitrogen metabolism; urea cycle; L-ornithine and urea from L-arginine: step 1/1. In Schizosaccharomyces pombe (strain 972 / ATCC 24843) (Fission yeast), this protein is Arginase (aru1).